The chain runs to 74 residues: Conotoxin VnMEKL-0221 (74 aa).

The signal sequence occupies residues Met-1–Ala-19. Positions Leu-20–Gly-46 are excised as a propeptide. Disulfide bonds link Cys-48–Cys-62, Cys-55–Cys-66, and Cys-61–Cys-71.

It belongs to the conotoxin O2 superfamily. Expressed by the venom duct.

It localises to the secreted. The chain is Conotoxin VnMEKL-0221 from Conus ventricosus (Mediterranean cone).